Consider the following 222-residue polypeptide: Small ribosomal subunit protein uS3 (222 aa).

The KH type-2 domain occupies 39-108 (IRRHIKEKLY…TISLDIKEIK (70 aa)).

Belongs to the universal ribosomal protein uS3 family. In terms of assembly, part of the 30S ribosomal subunit. Forms a tight complex with proteins S10 and S14.

Binds the lower part of the 30S subunit head. Binds mRNA in the 70S ribosome, positioning it for translation. The polypeptide is Small ribosomal subunit protein uS3 (Caldicellulosiruptor saccharolyticus (strain ATCC 43494 / DSM 8903 / Tp8T 6331)).